We begin with the raw amino-acid sequence, 592 residues long: Aspartate--tRNA(Asp/Asn) ligase (592 aa).

Residue Glu173 participates in L-aspartate binding. Residues 197–200 (QLFK) form an aspartate region. Arg219 contacts L-aspartate. Residues 219-221 (RDE) and Gln228 contribute to the ATP site. His451 provides a ligand contact to L-aspartate. Glu486 lines the ATP pocket. Arg493 serves as a coordination point for L-aspartate. Residue 538 to 541 (GLDR) participates in ATP binding.

It belongs to the class-II aminoacyl-tRNA synthetase family. Type 1 subfamily. In terms of assembly, homodimer.

The protein localises to the cytoplasm. It catalyses the reaction tRNA(Asx) + L-aspartate + ATP = L-aspartyl-tRNA(Asx) + AMP + diphosphate. Aspartyl-tRNA synthetase with relaxed tRNA specificity since it is able to aspartylate not only its cognate tRNA(Asp) but also tRNA(Asn). Reaction proceeds in two steps: L-aspartate is first activated by ATP to form Asp-AMP and then transferred to the acceptor end of tRNA(Asp/Asn). This Alkalilimnicola ehrlichii (strain ATCC BAA-1101 / DSM 17681 / MLHE-1) protein is Aspartate--tRNA(Asp/Asn) ligase.